Reading from the N-terminus, the 196-residue chain is MTSEQYSVKLTPDFDNPKWIGRHKHMFNFLDVNHNGRISLDEMVYKASDIVINNLGATPEQAKRHKDAVEAFFGGAGMKYGVETEWPEYIEGWKRLASEELKRYSKNQITLIRLWGDALFDIIDKDQNGAISLDEWKAYTKSDGIIQSSEDCEETFRVCDIDESGQLDVDEMTRQHLGFWYTMDPACEKLYGGAVP.

The propeptide occupies 1–7 (MTSEQYS). EF-hand domains are found at residues 18–53 (KWIG…IVIN), 54–108 (NLGA…SKNQ), 111–146 (LIRL…DGII), and 147–182 (QSSE…FWYT). Residues Asp31, Asn33, Asn35, Arg37, and Glu42 each coordinate Ca(2+). May interact with the chromophore regions lie at residues 47–57 (ASDIVINNLGA), 62–72 (AKRHKDAVEAF), and 107–117 (NQITLIRLWGD). Ca(2+) contacts are provided by Asp124, Asp126, Asn128, Glu135, Asp160, Asp162, Ser164, Gln166, and Glu171.

Belongs to the aequorin family. The reduction of the disulfide bond is necessary to regenerate aequorin from apoaequorin.

In terms of biological role, ca(2+)-dependent bioluminescence photoprotein. Displays an emission peak at 470 nm (blue light). Trace amounts of calcium ion trigger the intramolecular oxidation of the chromophore, coelenterazine into coelenteramide and CO(2) with the concomitant emission of light. This Aequorea victoria (Water jellyfish) protein is Aequorin-1.